The primary structure comprises 506 residues: Maturase K (506 aa).

It belongs to the intron maturase 2 family. MatK subfamily.

It localises to the plastid. The protein localises to the chloroplast. Usually encoded in the trnK tRNA gene intron. Probably assists in splicing its own and other chloroplast group II introns. The sequence is that of Maturase K from Trifolium striatum (Knotted clover).